The primary structure comprises 108 residues: Flagellar hook-basal body complex protein FliE (108 aa).

Belongs to the FliE family.

The protein resides in the bacterial flagellum basal body. The sequence is that of Flagellar hook-basal body complex protein FliE from Pseudomonas fluorescens (strain ATCC BAA-477 / NRRL B-23932 / Pf-5).